The chain runs to 132 residues: MNQPELSYYGTGRRKSSVARVTLKHGNGQFKINNRVAKEYLKSDILIKDALQPLSITNTVSEFNIRVNAHGGGISGQAGAIRLGIARALLKVSADYRPGLKVAGMLTRDARAKERKKFGLRKARRARQFSKR.

Belongs to the universal ribosomal protein uS9 family.

This Mesomycoplasma hyopneumoniae (strain 232) (Mycoplasma hyopneumoniae) protein is Small ribosomal subunit protein uS9.